The following is a 352-amino-acid chain: Fe(3+) ions import ATP-binding protein FbpC (352 aa).

Residues 5–239 form the ABC transporter domain; sequence LHIGHLSKSF…PADLDAALFI (235 aa). An ATP-binding site is contributed by 37-44; that stretch reads GASGCGKT.

Belongs to the ABC transporter superfamily. Fe(3+) ion importer (TC 3.A.1.10) family. The complex is composed of two ATP-binding proteins (FbpC), two transmembrane proteins (FbpB) and a solute-binding protein (FbpA).

It localises to the cell inner membrane. It carries out the reaction Fe(3+)(out) + ATP + H2O = Fe(3+)(in) + ADP + phosphate + H(+). Its function is as follows. Part of the ABC transporter complex FbpABC involved in Fe(3+) ions import. Responsible for energy coupling to the transport system. The chain is Fe(3+) ions import ATP-binding protein FbpC from Neisseria gonorrhoeae (strain ATCC 700825 / FA 1090).